The primary structure comprises 134 residues: Small ribosomal subunit protein uS9 (134 aa).

The segment at 114–134 (EVERKKYGLKKARRAPQFSKR) is disordered. Residues 120-134 (YGLKKARRAPQFSKR) are compositionally biased toward basic residues.

Belongs to the universal ribosomal protein uS9 family.

This Thermotoga neapolitana (strain ATCC 49049 / DSM 4359 / NBRC 107923 / NS-E) protein is Small ribosomal subunit protein uS9.